We begin with the raw amino-acid sequence, 466 residues long: Asparagine--tRNA ligase (466 aa).

This sequence belongs to the class-II aminoacyl-tRNA synthetase family. In terms of assembly, homodimer.

It is found in the cytoplasm. The catalysed reaction is tRNA(Asn) + L-asparagine + ATP = L-asparaginyl-tRNA(Asn) + AMP + diphosphate + H(+). The protein is Asparagine--tRNA ligase of Vibrio vulnificus (strain YJ016).